We begin with the raw amino-acid sequence, 442 residues long: Adenylosuccinate synthetase (442 aa).

GTP is bound by residues 25–31 (GDEGKGK), 53–55 (GHT), and lysine 62. Residue aspartate 26 is the Proton acceptor of the active site. Mg(2+) contacts are provided by aspartate 26 and glycine 53. IMP is bound by residues 26-29 (DEGK) and 51-54 (NAGH). The active-site Proton donor is the histidine 54. Threonine 141, arginine 155, asparagine 232, and threonine 247 together coordinate IMP. Threonine 307 lines the GTP pocket. Position 307–313 (307–313 (TTTKRPR)) interacts with substrate. Residue arginine 311 participates in IMP binding. Residues arginine 313, 339 to 341 (KLD), and 425 to 427 (GVG) each bind GTP.

The protein belongs to the adenylosuccinate synthetase family. As to quaternary structure, homodimer. Mg(2+) is required as a cofactor.

Its subcellular location is the cytoplasm. The enzyme catalyses IMP + L-aspartate + GTP = N(6)-(1,2-dicarboxyethyl)-AMP + GDP + phosphate + 2 H(+). It participates in purine metabolism; AMP biosynthesis via de novo pathway; AMP from IMP: step 1/2. Its activity is regulated as follows. Inhibited by hadacidin. Activated by fructose 1,6-bisphosphate. Its function is as follows. Plays an important role in the salvage pathway for purine nucleotide biosynthesis. Catalyzes the first committed step in the biosynthesis of AMP from IMP. The chain is Adenylosuccinate synthetase (Adss) from Plasmodium falciparum.